The following is a 275-amino-acid chain: Diaminopimelate epimerase (275 aa).

Substrate contacts are provided by Asn13, Gln46, and Asn65. Cys74 acts as the Proton donor in catalysis. Substrate-binding positions include 75–76, Asn158, Asn191, and 209–210; these read GN and ER. Cys218 acts as the Proton acceptor in catalysis. Residue 219–220 participates in substrate binding; the sequence is GT.

Belongs to the diaminopimelate epimerase family. Homodimer.

The protein localises to the cytoplasm. The enzyme catalyses (2S,6S)-2,6-diaminopimelate = meso-2,6-diaminopimelate. Its pathway is amino-acid biosynthesis; L-lysine biosynthesis via DAP pathway; DL-2,6-diaminopimelate from LL-2,6-diaminopimelate: step 1/1. Catalyzes the stereoinversion of LL-2,6-diaminopimelate (L,L-DAP) to meso-diaminopimelate (meso-DAP), a precursor of L-lysine and an essential component of the bacterial peptidoglycan. In Nitrosomonas europaea (strain ATCC 19718 / CIP 103999 / KCTC 2705 / NBRC 14298), this protein is Diaminopimelate epimerase.